The sequence spans 556 residues: Phosphoglucomutase (556 aa).

Alpha-D-glucose 1,6-bisphosphate contacts are provided by Arg-22 and Ser-114. The active-site Phosphoserine intermediate is Ser-114. Residues Ser-114, Asp-279, Asp-281, and Asp-283 each contribute to the Mg(2+) site. Ser-114 is modified (phosphoserine). Asp-283, Arg-284, Thr-347, Glu-366, Ser-368, and Lys-379 together coordinate alpha-D-glucose 1,6-bisphosphate.

The protein belongs to the phosphohexose mutase family. Monomer. Mg(2+) is required as a cofactor.

It localises to the cytoplasm. It catalyses the reaction alpha-D-glucose 1-phosphate = alpha-D-glucose 6-phosphate. It carries out the reaction O-phospho-L-seryl-[protein] + alpha-D-glucose 1-phosphate = alpha-D-glucose 1,6-bisphosphate + L-seryl-[protein]. The enzyme catalyses alpha-D-glucose 1,6-bisphosphate + L-seryl-[protein] = O-phospho-L-seryl-[protein] + alpha-D-glucose 6-phosphate. Its function is as follows. Catalyzes the reversible isomerization of alpha-D-glucose 1-phosphate to alpha-D-glucose 6-phosphate. The mechanism proceeds via the intermediate compound alpha-D-glucose 1,6-bisphosphate. Key enzyme in hexose metabolism. The reverse reaction is an essential step for biosynthesis because glucose 1-phosphate is the starting point for the synthesis of UDP-glucose, which acts as a precursor for the synthesis of oligosaccharides and trehalose. The chain is Phosphoglucomutase (pgmB) from Emericella nidulans (strain FGSC A4 / ATCC 38163 / CBS 112.46 / NRRL 194 / M139) (Aspergillus nidulans).